Reading from the N-terminus, the 188-residue chain is Threonylcarbamoyl-AMP synthase (188 aa).

One can recognise a YrdC-like domain in the interval 8–188 (EGAQPGLHAY…DLATGKILRA (181 aa)).

Belongs to the SUA5 family. TsaC subfamily.

Its subcellular location is the cytoplasm. It carries out the reaction L-threonine + hydrogencarbonate + ATP = L-threonylcarbamoyladenylate + diphosphate + H2O. Functionally, required for the formation of a threonylcarbamoyl group on adenosine at position 37 (t(6)A37) in tRNAs that read codons beginning with adenine. Catalyzes the conversion of L-threonine, HCO(3)(-)/CO(2) and ATP to give threonylcarbamoyl-AMP (TC-AMP) as the acyladenylate intermediate, with the release of diphosphate. This Thiobacillus denitrificans (strain ATCC 25259 / T1) protein is Threonylcarbamoyl-AMP synthase.